Here is a 531-residue protein sequence, read N- to C-terminus: MKPVKPPRINGRVPVLSAQEAVNYIPDEATLCVLGAGGGILEATTLITALADKYKQTQTPRNLSIISPTGLGDRADRGISPLAQEGLVKWALCGHWGQSPRISDLAEQNKIIAYNYPQGVLTQTLRAAAAHQPGIISDIGIGTFVDPRQQGGKLNEVTKEDLIKLVEFDNKEYLYYKAIAPDIAFIRATTCDSEGYATFEDEVMYLDALVIAQAVHNNGGIVMMQVQKMVKKATLHPKSVRIPGYLVDIVVVDPDQSQLYGGAPVNRFISGDFTLDDSTKLSLPLNQRKLVARRALFEMRKGAVGNVGVGIADGIGLVAREEGCADDFILTVETGPIGGITSQGIAFGANVNTRAILDMTSQFDFYHGGGLDVCYLSFAEVDQHGNVGVHKFNGKIMGTGGFIDISATSKKIIFCGTLTAGSLKTEIADGKLNIVQEGRVKKFIRELPEITFSGKIALERGLDVRYITERAVFTLKEDGLHLIEIAPGVDLQKDILDKMDFTPVISPELKLMDERLFIDAAMGFVLPEAAH.

Catalysis depends on E333, which acts as the 5-glutamyl coenzyme A thioester intermediate.

Belongs to the 3-oxoacid CoA-transferase family. As to quaternary structure, homotetramer; dimer of dimers.

The catalysed reaction is an acyl-CoA + acetate = a carboxylate + acetyl-CoA. Its function is as follows. CoA transferase having broad substrate specificity for short-chain acyl-CoA thioesters with the activity decreasing when the length of the carboxylic acid chain exceeds four carbons. Exhibits high activity with acetoacetyl-CoA, propionyl-CoA, crotonoyl-CoA or butyryl-CoA as donors, with acetate as an acceptor. When acetyl-CoA is used as the donor, propionate, acetoacetate, butyrate, isobutyrate, and 4-hydroxybutyrate can be utilized as acceptors but not isovalerate. May play a role in short-chain fatty acid metabolism in E.coli. In Escherichia coli O157:H7, this protein is Acetate CoA-transferase YdiF.